We begin with the raw amino-acid sequence, 303 residues long: Ornithine carbamoyltransferase (303 aa).

Residues 53-56 (STRT), Q80, R104, and 131-134 (HPCQ) contribute to the carbamoyl phosphate site. Residues N162, D222, and 226–227 (SM) each bind L-ornithine. Carbamoyl phosphate contacts are provided by residues 261 to 262 (CL) and R289.

Belongs to the aspartate/ornithine carbamoyltransferase superfamily. OTCase family.

The protein resides in the cytoplasm. The enzyme catalyses carbamoyl phosphate + L-ornithine = L-citrulline + phosphate + H(+). The protein operates within amino-acid biosynthesis; L-arginine biosynthesis; L-arginine from L-ornithine and carbamoyl phosphate: step 1/3. Reversibly catalyzes the transfer of the carbamoyl group from carbamoyl phosphate (CP) to the N(epsilon) atom of ornithine (ORN) to produce L-citrulline. The chain is Ornithine carbamoyltransferase from Mesorhizobium japonicum (strain LMG 29417 / CECT 9101 / MAFF 303099) (Mesorhizobium loti (strain MAFF 303099)).